Reading from the N-terminus, the 445-residue chain is Argininosuccinate synthase (445 aa).

Residues 17-25 (AFSGGLDTS) and alanine 43 each bind ATP. Position 99 (tyrosine 99) interacts with L-citrulline. Glycine 129 and threonine 131 together coordinate ATP. Positions 131, 135, and 136 each coordinate L-aspartate. Position 135 (asparagine 135) interacts with L-citrulline. Aspartate 136 lines the ATP pocket. Residues arginine 139 and serine 192 each contribute to the L-citrulline site. Position 194 (aspartate 194) interacts with ATP. Threonine 201, glutamate 203, and glutamate 280 together coordinate L-citrulline.

This sequence belongs to the argininosuccinate synthase family. Type 2 subfamily. In terms of assembly, homotetramer.

Its subcellular location is the cytoplasm. It catalyses the reaction L-citrulline + L-aspartate + ATP = 2-(N(omega)-L-arginino)succinate + AMP + diphosphate + H(+). Its pathway is amino-acid biosynthesis; L-arginine biosynthesis; L-arginine from L-ornithine and carbamoyl phosphate: step 2/3. This Rhodopseudomonas palustris (strain BisA53) protein is Argininosuccinate synthase.